An 863-amino-acid chain; its full sequence is Dipeptidyl peptidase 9 (863 aa).

Residues 1–20 form a disordered region; the sequence is MATTGTPTADRGDAAATDDP. At Ala2 the chain carries N-acetylalanine. Catalysis depends on charge relay system residues Ser730, Asp808, and His840. Position 730 (Ser730) interacts with Val-boroPro.

The protein belongs to the peptidase S9B family. DPPIV subfamily. As to quaternary structure, homodimer. Forms a ternary complex with NLRP1, composed of a DPP9 homodimer, one full-length NLRP1 protein, and one cleaved C-terminus of NLRP1 (NACHT, LRR and PYD domains-containing protein 1, C-terminus). Forms a ternary complex with CARD8, composed of a DPP9 homodimer, one full-length NLRP1 protein, and one cleaved C-terminus of CARD8 (Caspase recruitment domain-containing protein 8, C-terminus). In the ternary complex, only one subunit of the DPP9 homodimer is bound to NLRP1 or CARD8. As to expression, ubiquitously expressed, with highest levels in liver, heart and muscle, and lowest levels in brain.

The protein localises to the cytoplasm. The protein resides in the cytosol. Its subcellular location is the nucleus. The catalysed reaction is Release of an N-terminal dipeptide, Xaa-Yaa-|-Zaa-, from a polypeptide, preferentially when Yaa is Pro, provided Zaa is neither Pro nor hydroxyproline.. Its activity is regulated as follows. Inhibited by the serine proteinase inhibitor 4-(2-aminoethyl)benzenesulphonyl fluoride (AEBSF), and by di-isopropylfluorophosphate. Inhibited by Val-boroPro (Talabostat, PT-100), a non-selective inhibitor, which triggers pyroptosis in monocytes and macrophages. Val-boroPro inhibits activity by binding to the active site, mimicking a substrate-bound state, thereby displacing the C-terminal fragment of NLRP1, leading to activation of the NLRP1 inflammasome. In contrast, Val-boroPro does not directly displaces CARD8: it acts by promoting degradation of the N-terminal part of CARD8, leading to indirect disruption of the ternary complex. Chemical inhibition of DPP9 by Val-boroPro in HIV-1-infected cells activates the CARD8 inflammasome, triggering cell death, offering a promising strategy for the elimination of HIV-1 reservoirs in people living with HIV-1. In terms of biological role, dipeptidyl peptidase that cleaves off N-terminal dipeptides from proteins having a Pro or Ala residue at position 2. Acts as a key inhibitor of caspase-1-dependent monocyte and macrophage pyroptosis in resting cells by preventing activation of NLRP1 and CARD8. Sequesters the cleaved C-terminal part of NLRP1 and CARD8, which respectively constitute the active part of the NLRP1 and CARD8 inflammasomes, in a ternary complex, thereby preventing their oligomerization and activation. The dipeptidyl peptidase activity is required to suppress NLRP1 and CARD8; however, neither NLRP1 nor CARD8 are bona fide substrates of DPP9, suggesting the existence of substrate(s) required for NLRP1 and CARD8 inhibition. The polypeptide is Dipeptidyl peptidase 9 (Homo sapiens (Human)).